Consider the following 316-residue polypeptide: F-box protein At4g09920 (316 aa).

An F-box domain is found at 1-47; the sequence is MDRIIGLPDEVLVKILSFVPTKVAVSTSILSKRWEFLWMWLTKLKFG.

The sequence is that of F-box protein At4g09920 from Arabidopsis thaliana (Mouse-ear cress).